The chain runs to 246 residues: Phosphatidylserine decarboxylase proenzyme (246 aa).

The active-site Schiff-base intermediate with substrate; via pyruvic acid is S204. At S204 the chain carries Pyruvic acid (Ser); by autocatalysis.

The protein belongs to the phosphatidylserine decarboxylase family. PSD-A subfamily. Heterodimer of a large membrane-associated beta subunit and a small pyruvoyl-containing alpha subunit. It depends on pyruvate as a cofactor. Post-translationally, is synthesized initially as an inactive proenzyme. Formation of the active enzyme involves a self-maturation process in which the active site pyruvoyl group is generated from an internal serine residue via an autocatalytic post-translational modification. Two non-identical subunits are generated from the proenzyme in this reaction, and the pyruvate is formed at the N-terminus of the alpha chain, which is derived from the carboxyl end of the proenzyme. The post-translation cleavage follows an unusual pathway, termed non-hydrolytic serinolysis, in which the side chain hydroxyl group of the serine supplies its oxygen atom to form the C-terminus of the beta chain, while the remainder of the serine residue undergoes an oxidative deamination to produce ammonia and the pyruvoyl prosthetic group on the alpha chain.

It localises to the cell membrane. It carries out the reaction a 1,2-diacyl-sn-glycero-3-phospho-L-serine + H(+) = a 1,2-diacyl-sn-glycero-3-phosphoethanolamine + CO2. It functions in the pathway phospholipid metabolism; phosphatidylethanolamine biosynthesis; phosphatidylethanolamine from CDP-diacylglycerol: step 2/2. Functionally, catalyzes the formation of phosphatidylethanolamine (PtdEtn) from phosphatidylserine (PtdSer). This Zymomonas mobilis subsp. mobilis (strain ATCC 31821 / ZM4 / CP4) protein is Phosphatidylserine decarboxylase proenzyme.